The primary structure comprises 295 residues: Ribosomal RNA small subunit methyltransferase H (295 aa).

Residues 32–34 (GGY), aspartate 50, phenylalanine 77, aspartate 98, and glutamine 105 each bind S-adenosyl-L-methionine. Positions 275-295 (KEISENTRSRSAKLRGIVKEE) are disordered.

The protein belongs to the methyltransferase superfamily. RsmH family.

It is found in the cytoplasm. It carries out the reaction cytidine(1402) in 16S rRNA + S-adenosyl-L-methionine = N(4)-methylcytidine(1402) in 16S rRNA + S-adenosyl-L-homocysteine + H(+). Its function is as follows. Specifically methylates the N4 position of cytidine in position 1402 (C1402) of 16S rRNA. This chain is Ribosomal RNA small subunit methyltransferase H, found in Anaplasma phagocytophilum (strain HZ).